The sequence spans 177 residues: MASGNARIGKPAPDFKATAVVDGAFKEVKLSDYKGKYVVLFFYPLDFTFVCPTEIIAFSNRAEDFHKLGCEVLGVSVDSQFTHLAWINTPRKEGGLGPLNIPLLADVTRRLSEDYGVLKTDEGIAYRGLFIIDGKGVLRQITVNDLPVGRSVDEALRLVQAFQYTDEHGEGPCFASP.

Position 2 is an N-acetylalanine (Ala2). The Thioredoxin domain maps to 6–164 (ARIGKPAPDF…ALRLVQAFQY (159 aa)). The Cysteine sulfenic acid (-SOH) intermediate role is filled by Cys51. Ser112 carries the phosphoserine modification.

It belongs to the peroxiredoxin family. AhpC/Prx1 subfamily. Homodimer; disulfide-linked, upon oxidation. 5 homodimers assemble to form a ring-like decamer. Interacts with TIPIN. The enzyme can be inactivated by further oxidation of the cysteine sulfenic acid (C(P)-SOH) to sulphinic acid (C(P)-SO2H) instead of its condensation to a disulfide bond. It can be reactivated by forming a transient disulfide bond with sulfiredoxin SRXN1, which reduces the cysteine sulfinic acid in an ATP- and Mg-dependent manner. In terms of processing, acetylation increases resistance to transition to high molecular-mass complexes. Deacetylated by HDAC6 which decreases reducing activity.

The protein resides in the cytoplasm. It carries out the reaction a hydroperoxide + [thioredoxin]-dithiol = an alcohol + [thioredoxin]-disulfide + H2O. Its function is as follows. Thiol-specific peroxidase that catalyzes the reduction of hydrogen peroxide and organic hydroperoxides to water and alcohols, respectively. Plays a role in cell protection against oxidative stress by detoxifying peroxides and as sensor of hydrogen peroxide-mediated signaling events. Might participate in the signaling cascades of growth factors and tumor necrosis factor-alpha by regulating the intracellular concentrations of H(2)O(2). The polypeptide is Peroxiredoxin-2 (PRDX2) (Pongo abelii (Sumatran orangutan)).